A 371-amino-acid chain; its full sequence is Queuine tRNA-ribosyltransferase (371 aa).

Residue aspartate 93 is the Proton acceptor of the active site. Substrate-binding positions include 93 to 97 (DSGGF), aspartate 147, glutamine 191, and glycine 218. The segment at 249-255 (GVGTPLD) is RNA binding. Aspartate 268 acts as the Nucleophile in catalysis. The tract at residues 273 to 277 (TRNAR) is RNA binding; important for wobble base 34 recognition. Zn(2+)-binding residues include cysteine 306, cysteine 308, cysteine 311, and histidine 337.

It belongs to the queuine tRNA-ribosyltransferase family. As to quaternary structure, homodimer. Within each dimer, one monomer is responsible for RNA recognition and catalysis, while the other monomer binds to the replacement base PreQ1. Zn(2+) is required as a cofactor.

It catalyses the reaction 7-aminomethyl-7-carbaguanine + guanosine(34) in tRNA = 7-aminomethyl-7-carbaguanosine(34) in tRNA + guanine. It functions in the pathway tRNA modification; tRNA-queuosine biosynthesis. Catalyzes the base-exchange of a guanine (G) residue with the queuine precursor 7-aminomethyl-7-deazaguanine (PreQ1) at position 34 (anticodon wobble position) in tRNAs with GU(N) anticodons (tRNA-Asp, -Asn, -His and -Tyr). Catalysis occurs through a double-displacement mechanism. The nucleophile active site attacks the C1' of nucleotide 34 to detach the guanine base from the RNA, forming a covalent enzyme-RNA intermediate. The proton acceptor active site deprotonates the incoming PreQ1, allowing a nucleophilic attack on the C1' of the ribose to form the product. After dissociation, two additional enzymatic reactions on the tRNA convert PreQ1 to queuine (Q), resulting in the hypermodified nucleoside queuosine (7-(((4,5-cis-dihydroxy-2-cyclopenten-1-yl)amino)methyl)-7-deazaguanosine). This chain is Queuine tRNA-ribosyltransferase, found in Lawsonia intracellularis (strain PHE/MN1-00).